A 470-amino-acid polypeptide reads, in one-letter code: Zinc finger and BTB domain-containing protein 8A.1-A (470 aa).

One can recognise a BTB domain in the interval 24-92 (CDCHIIVEGQ…VYSGKLPLSG (69 aa)). The disordered stretch occupies residues 260-280 (EDEDAASHSWPESPQQESLDQ). A compositionally biased stretch (polar residues) spans 269 to 278 (WPESPQQESL). C2H2-type zinc fingers lie at residues 316–338 (FKCP…LRCH) and 344–367 (YPCE…QTIH). Positions 439–450 (GRKENGSERAES) are enriched in basic and acidic residues. Residues 439 to 470 (GRKENGSERAESDLAIQEVVDSEDDELKEKQD) are disordered.

The protein localises to the nucleus. Functionally, may be involved in transcriptional regulation. This is Zinc finger and BTB domain-containing protein 8A.1-A (zbtb8a.1-a) from Xenopus laevis (African clawed frog).